A 439-amino-acid chain; its full sequence is Prenyltransferase iacE (439 aa).

Residues 88–89 (WI), E97, R112, K198, Y200, R271, K273, and Y275 each bind substrate.

This sequence belongs to the tryptophan dimethylallyltransferase family.

It catalyses the reaction siccayne + dimethylallyl diphosphate = pestalodiol + diphosphate. It participates in secondary metabolite biosynthesis. Prenyltransferase; part of the gene cluster that mediates the biosynthesis of iso-A82775C, a enylepoxycyclohexane and biosynthetic precursor of the chloropestolide anticancer natural products. Within the cluster, the prenyltransferase iacE prenylates siccayne to generate pestalodiol E, using dimethylallyl diphosphate (DMAPP) as cosubstrate. The probable oxidoreductase iacF is then involved in the epoxidation of pestalodiol F to pestalodiol F, which is further converted to pestalofone A by the short-chain dehydrogenase/reductase iacG. Iso-A82775C is subsequently generated from pestalofone A by the short-chain dehydrogenase/reductase iacC. Iso-A82775C is further condensed with maldoxin via a Diels-Alder reaction to produce the anticancer natural products chloropestolides A to E. The sequence is that of Prenyltransferase iacE from Pestalotiopsis fici (strain W106-1 / CGMCC3.15140).